The primary structure comprises 399 residues: Phosphoglycerate kinase (399 aa).

Residues 22–24 (DFN), Arg38, 61–64 (HLGR), Arg120, and Arg153 contribute to the substrate site. ATP is bound by residues Lys204, Glu326, and 352 to 355 (GGDT).

Belongs to the phosphoglycerate kinase family. In terms of assembly, monomer.

It is found in the cytoplasm. It catalyses the reaction (2R)-3-phosphoglycerate + ATP = (2R)-3-phospho-glyceroyl phosphate + ADP. It participates in carbohydrate degradation; glycolysis; pyruvate from D-glyceraldehyde 3-phosphate: step 2/5. The polypeptide is Phosphoglycerate kinase (Pelobacter propionicus (strain DSM 2379 / NBRC 103807 / OttBd1)).